Here is a 320-residue protein sequence, read N- to C-terminus: o-succinylbenzoate synthase (320 aa).

Lysine 133 (proton donor) is an active-site residue. The Mg(2+) site is built by aspartate 161, glutamate 190, and aspartate 213. Lysine 235 serves as the catalytic Proton acceptor.

This sequence belongs to the mandelate racemase/muconate lactonizing enzyme family. MenC type 1 subfamily. The cofactor is a divalent metal cation.

The catalysed reaction is (1R,6R)-6-hydroxy-2-succinyl-cyclohexa-2,4-diene-1-carboxylate = 2-succinylbenzoate + H2O. The protein operates within quinol/quinone metabolism; 1,4-dihydroxy-2-naphthoate biosynthesis; 1,4-dihydroxy-2-naphthoate from chorismate: step 4/7. Its pathway is quinol/quinone metabolism; menaquinone biosynthesis. Functionally, converts 2-succinyl-6-hydroxy-2,4-cyclohexadiene-1-carboxylate (SHCHC) to 2-succinylbenzoate (OSB). This Escherichia coli O9:H4 (strain HS) protein is o-succinylbenzoate synthase.